We begin with the raw amino-acid sequence, 240 residues long: Phosphoribosylaminoimidazole-succinocarboxamide synthase (240 aa).

This sequence belongs to the SAICAR synthetase family.

It catalyses the reaction 5-amino-1-(5-phospho-D-ribosyl)imidazole-4-carboxylate + L-aspartate + ATP = (2S)-2-[5-amino-1-(5-phospho-beta-D-ribosyl)imidazole-4-carboxamido]succinate + ADP + phosphate + 2 H(+). It functions in the pathway purine metabolism; IMP biosynthesis via de novo pathway; 5-amino-1-(5-phospho-D-ribosyl)imidazole-4-carboxamide from 5-amino-1-(5-phospho-D-ribosyl)imidazole-4-carboxylate: step 1/2. This chain is Phosphoribosylaminoimidazole-succinocarboxamide synthase, found in Wolbachia sp. subsp. Drosophila simulans (strain wRi).